The following is a 143-amino-acid chain: Small ribosomal subunit protein eS12 (143 aa).

Residues K85, K95, and K114 each participate in a glycyl lysine isopeptide (Lys-Gly) (interchain with G-Cter in ubiquitin) cross-link.

It belongs to the eukaryotic ribosomal protein eS12 family. As to quaternary structure, component of the small ribosomal subunit (SSU). Mature yeast ribosomes consist of a small (40S) and a large (60S) subunit. The 40S small subunit contains 1 molecule of ribosomal RNA (18S rRNA) and 33 different proteins (encoded by 57 genes). The large 60S subunit contains 3 rRNA molecules (25S, 5.8S and 5S rRNA) and 46 different proteins (encoded by 81 genes).

Its subcellular location is the cytoplasm. Functionally, component of the ribosome, a large ribonucleoprotein complex responsible for the synthesis of proteins in the cell. The small ribosomal subunit (SSU) binds messenger RNAs (mRNAs) and translates the encoded message by selecting cognate aminoacyl-transfer RNA (tRNA) molecules. The large subunit (LSU) contains the ribosomal catalytic site termed the peptidyl transferase center (PTC), which catalyzes the formation of peptide bonds, thereby polymerizing the amino acids delivered by tRNAs into a polypeptide chain. The nascent polypeptides leave the ribosome through a tunnel in the LSU and interact with protein factors that function in enzymatic processing, targeting, and the membrane insertion of nascent chains at the exit of the ribosomal tunnel. The protein is Small ribosomal subunit protein eS12 of Saccharomyces cerevisiae (strain ATCC 204508 / S288c) (Baker's yeast).